Consider the following 451-residue polypeptide: Chromosomal replication initiator protein DnaA (451 aa).

A domain I, interacts with DnaA modulators region spans residues 1 to 82; that stretch reads MENSLWKQCL…RLELQIGSSA (82 aa). The segment at 82–114 is domain II; that stretch reads AVVAPPRRRQVSVTTPSPSAAADQTPATRSAAS. The disordered stretch occupies residues 85-112; the sequence is APPRRRQVSVTTPSPSAAADQTPATRSA. Positions 115-331 are domain III, AAA+ region; the sequence is NLNSNFTFDT…GALRRVVANA (217 aa). Residues G159, G161, K162, and T163 each contribute to the ATP site. Positions 332-451 are domain IV, binds dsDNA; it reads QFTGQEITVE…YSNLLRTLST (120 aa).

This sequence belongs to the DnaA family. Oligomerizes as a right-handed, spiral filament on DNA at oriC.

It is found in the cytoplasm. In terms of biological role, plays an essential role in the initiation and regulation of chromosomal replication. ATP-DnaA binds to the origin of replication (oriC) to initiate formation of the DNA replication initiation complex once per cell cycle. Binds the DnaA box (a 9 base pair repeat at the origin) and separates the double-stranded (ds)DNA. Forms a right-handed helical filament on oriC DNA; dsDNA binds to the exterior of the filament while single-stranded (ss)DNA is stabiized in the filament's interior. The ATP-DnaA-oriC complex binds and stabilizes one strand of the AT-rich DNA unwinding element (DUE), permitting loading of DNA polymerase. After initiation quickly degrades to an ADP-DnaA complex that is not apt for DNA replication. Binds acidic phospholipids. This Alkalilimnicola ehrlichii (strain ATCC BAA-1101 / DSM 17681 / MLHE-1) protein is Chromosomal replication initiator protein DnaA.